The following is a 73-amino-acid chain: Toxin Td4 (73 aa).

The first 7 residues, Ile1–Cys7, serve as a signal peptide directing secretion. The 63-residue stretch at Lys8–Gly70 folds into the LCN-type CS-alpha/beta domain. Disulfide bonds link Cys18-Cys69, Cys22-Cys44, Cys30-Cys50, and Cys34-Cys52. The residue at position 71 (Arg71) is an Arginine amide.

Belongs to the long (4 C-C) scorpion toxin superfamily. Sodium channel inhibitor family. Beta subfamily. In terms of tissue distribution, expressed by the venom gland.

It localises to the secreted. Its function is as follows. Beta toxins bind voltage-independently at site-4 of sodium channels (Nav) and shift the voltage of activation toward more negative potentials thereby affecting sodium channel activation and promoting spontaneous and repetitive firing. This is Toxin Td4 from Tityus discrepans (Venezuelan scorpion).